The sequence spans 69 residues: uncharacterized protein (69 aa).

This is an uncharacterized protein from Escherichia coli O6:H1 (strain CFT073 / ATCC 700928 / UPEC).